The sequence spans 332 residues: tRNA N6-adenosine threonylcarbamoyltransferase (332 aa).

Fe cation contacts are provided by His108 and His112. Residues 129–133 (LISGG), Asp161, Glu178, and Ser258 contribute to the substrate site. Asp286 provides a ligand contact to Fe cation.

Belongs to the KAE1 / TsaD family. Requires Fe(2+) as cofactor.

It is found in the cytoplasm. The catalysed reaction is L-threonylcarbamoyladenylate + adenosine(37) in tRNA = N(6)-L-threonylcarbamoyladenosine(37) in tRNA + AMP + H(+). In terms of biological role, required for the formation of a threonylcarbamoyl group on adenosine at position 37 (t(6)A37) in tRNAs that read codons beginning with adenine. Is probably involved in the transfer of the threonylcarbamoyl moiety of threonylcarbamoyl-AMP (TC-AMP) to the N6 group of A37. The protein is tRNA N6-adenosine threonylcarbamoyltransferase of Pyrobaculum arsenaticum (strain DSM 13514 / JCM 11321 / PZ6).